The following is a 338-amino-acid chain: Heat-inducible transcription repressor HrcA (338 aa).

It belongs to the HrcA family.

In terms of biological role, negative regulator of class I heat shock genes (grpE-dnaK-dnaJ and groELS operons). Prevents heat-shock induction of these operons. The protein is Heat-inducible transcription repressor HrcA of Bacillus cereus (strain AH820).